A 273-amino-acid polypeptide reads, in one-letter code: 3-((Z)-2-isocyanoethenyl)-1H-indole synthase (273 aa).

Fe cation-binding residues include H105, D107, and H254.

It belongs to the TfdA dioxygenase family. Requires Fe(2+) as cofactor.

The catalysed reaction is (2S)-3-(1H-indol-3-yl)-2-isocyanopropanoate + 2-oxoglutarate + O2 + H(+) = 3-[(Z)-2-isocyanoethenyl]-1H-indole + succinate + 2 CO2 + H2O. Its function is as follows. Involved in the biosynthesis of ambiguines, a family of hapalindole-type alkaloids. Responsible for the synthesis of Z-3-(2-isocyanoethen)-indole, a biosynthetic precursor to all ambiguines. This Fischerella ambigua (strain UTEX 1903) protein is 3-((Z)-2-isocyanoethenyl)-1H-indole synthase.